Consider the following 423-residue polypeptide: UDP-N-acetylglucosamine 1-carboxyvinyltransferase 2 (423 aa).

23–24 (KN) contributes to the phosphoenolpyruvate binding site. Arg-95 is a binding site for UDP-N-acetyl-alpha-D-glucosamine. Cys-119 (proton donor) is an active-site residue. Residue Cys-119 is modified to 2-(S-cysteinyl)pyruvic acid O-phosphothioketal. The UDP-N-acetyl-alpha-D-glucosamine site is built by Asp-306 and Ile-328.

The protein belongs to the EPSP synthase family. MurA subfamily.

The protein resides in the cytoplasm. It catalyses the reaction phosphoenolpyruvate + UDP-N-acetyl-alpha-D-glucosamine = UDP-N-acetyl-3-O-(1-carboxyvinyl)-alpha-D-glucosamine + phosphate. Its pathway is cell wall biogenesis; peptidoglycan biosynthesis. Its function is as follows. Cell wall formation. Adds enolpyruvyl to UDP-N-acetylglucosamine. The sequence is that of UDP-N-acetylglucosamine 1-carboxyvinyltransferase 2 from Symbiobacterium thermophilum (strain DSM 24528 / JCM 14929 / IAM 14863 / T).